Here is a 397-residue protein sequence, read N- to C-terminus: MSLLENIRMALSSVLAHKMRSILTMLGIIIGVGSVIVVVAVGQGGEQMLKQSISGPGNTVELYYMPSDEELASNPNAAAESTFTENDIKGLKGIEGIKQVVASTSESMKARYHEEETDATVNGINDGYMNVNSLKIESGRTFTDNDFLAGNRVGIISQKMAKELFDKTSPLGEVVWINGQPVEIIGVLKKVTGLLSFDLSEMYVPFNMMKSSFGTSDFSNVSLQVESADDIKSAGKEAAQLVNDNHGTEDSYQVMNMEEIAAGIGKVTAIMTTIIGSIAGISLLVGGIGVMNIMLVSVTERTREIGIRKSLGATRGQILTQFLIESVVLTLIGGLVGIGIGYGGAALVSAIAGWPSLISWQVVCGGVLFSMLIGVIFGMLPANKAAKLDPIEALRYE.

4 helical membrane-spanning segments follow: residues 22 to 42 (ILTMLGIIIGVGSVIVVVAVG), 270 to 290 (IMTTIIGSIAGISLLVGGIGV), 327 to 347 (VVLTLIGGLVGIGIGYGGAAL), and 362 to 382 (VVCGGVLFSMLIGVIFGMLPA).

This sequence belongs to the ABC-4 integral membrane protein family. Part of a complex composed of YknX, YknY and YknZ. The complex interacts with YknW.

It is found in the cell membrane. It localises to the membrane raft. In terms of biological role, part of an unusual four-component transporter, which is required for protection against the killing factor SdpC (sporulation-delaying protein). This is an uncharacterized protein from Bacillus subtilis (strain 168).